The sequence spans 332 residues: MRIAVDAMGGDHAPKAIIDGVQKSLTAFSDIEITLVGDESKIKPYITNNERITILDAKEVIEPTDEPVRAVRRKKDSSMVKMAQEVSEGRADACISAGNTGALMTAGLFIVGRIDGIDRPALAPTLPTLDGSGFLLLDVGANVDAKPEHLVQYAMMGSIYAERVFPKSNPRVGLLNVGTEDKKGNDLTKKTFELLKASDLNFVGNVESRDLLEGVADVVVTDGFTGNIALKTIEGTALSVFKMLKETLTSSFTAKIAAGMMKPKLMQMKSKMDYSEYGGAALFGLKAPVIKAHGSSDENAIFHAIRQARDIVEKDVSAIIHQEVQKETTNES.

The protein belongs to the PlsX family. In terms of assembly, homodimer. Probably interacts with PlsY.

The protein localises to the cytoplasm. The catalysed reaction is a fatty acyl-[ACP] + phosphate = an acyl phosphate + holo-[ACP]. It participates in lipid metabolism; phospholipid metabolism. Catalyzes the reversible formation of acyl-phosphate (acyl-PO(4)) from acyl-[acyl-carrier-protein] (acyl-ACP). This enzyme utilizes acyl-ACP as fatty acyl donor, but not acyl-CoA. This Bacillus pumilus (strain SAFR-032) protein is Phosphate acyltransferase.